Reading from the N-terminus, the 174-residue chain is Shikimate kinase (174 aa).

Gly-15–Thr-20 contacts ATP. Ser-19 serves as a coordination point for Mg(2+). Substrate contacts are provided by Asp-37, Arg-61, and Gly-82. Arg-120 provides a ligand contact to ATP. Arg-138 is a binding site for substrate.

Belongs to the shikimate kinase family. Monomer. The cofactor is Mg(2+).

It is found in the cytoplasm. It catalyses the reaction shikimate + ATP = 3-phosphoshikimate + ADP + H(+). Its pathway is metabolic intermediate biosynthesis; chorismate biosynthesis; chorismate from D-erythrose 4-phosphate and phosphoenolpyruvate: step 5/7. Functionally, catalyzes the specific phosphorylation of the 3-hydroxyl group of shikimic acid using ATP as a cosubstrate. This is Shikimate kinase from Staphylococcus aureus (strain MSSA476).